A 206-amino-acid chain; its full sequence is Dehydration-responsive element-binding protein 2D (206 aa).

A disordered region spans residues 13–40; sequence ANKKQRTVQASSRKGCMRGKGGPDNASC. The AP2/ERF DNA-binding region spans 41 to 98; it reads TYKGVRQRTWGKWVAEIREPNRGARLWLGTFDTSREAALAYDSAARKLYGPEAHLNLP. The disordered stretch occupies residues 102 to 139; the sequence is RSYPKTASSPASQTTPSSNTGGKSSSDSESPCSSNEMS. The segment covering 107–139 has biased composition (low complexity); sequence TASSPASQTTPSSNTGGKSSSDSESPCSSNEMS.

Belongs to the AP2/ERF transcription factor family. ERF subfamily.

It is found in the nucleus. Its function is as follows. Putative transcriptional activator that binds specifically to the DNA sequence 5'-[AG]CCGAC-3'. Binding to the C-repeat/DRE element mediates high salinity-inducible transcription. This is Dehydration-responsive element-binding protein 2D (DREB2D) from Arabidopsis thaliana (Mouse-ear cress).